Reading from the N-terminus, the 511-residue chain is Glucan endo-1,3-beta-glucosidase 1 (511 aa).

The N-terminal stretch at 1-28 (MAFTSMVSTVPVLFFFFTLLLISANSSS) is a signal peptide. Asn-109 carries an N-linked (GlcNAc...) asparagine glycan. The active-site Proton donor is the Glu-137. Residues Asn-192 and Asn-274 are each glycosylated (N-linked (GlcNAc...) asparagine). Glu-284 (nucleophile) is an active-site residue. N-linked (GlcNAc...) asparagine glycosylation is found at Asn-374, Asn-378, Asn-407, Asn-473, and Asn-480. An intrachain disulfide couples Cys-382 to Cys-445. Ala-485 is lipidated: GPI-anchor amidated alanine. The propeptide at 486-511 (AGEATSRSLSRGFCVTIMILVTFSIL) is removed in mature form.

This sequence belongs to the glycosyl hydrolase 17 family. In terms of processing, contains two additional disulfide bonds.

Its subcellular location is the cell membrane. The catalysed reaction is Hydrolysis of (1-&gt;3)-beta-D-glucosidic linkages in (1-&gt;3)-beta-D-glucans.. In Arabidopsis thaliana (Mouse-ear cress), this protein is Glucan endo-1,3-beta-glucosidase 1.